Reading from the N-terminus, the 745-residue chain is Immunoglobulin superfamily containing leucine-rich repeat protein 2 (745 aa).

The signal sequence occupies residues 1–19 (MGPFGALCLAWALLGVVRA). The LRRNT domain maps to 20-51 (CPEPCACVDKYAHQFADCAYKELREVPEGLPA). Residues 20–589 (CPEPCACVDK…VFSTKKELPS (570 aa)) lie on the Extracellular side of the membrane. Residues N52 and N73 are each glycosylated (N-linked (GlcNAc...) asparagine). LRR repeat units lie at residues 52–73 (NVTTLSLSANKITVLRRGAFVN), 76–97 (QVTSLWLAHSEVRTVESGALAV), 100–123 (QLKNLDLSHNLISNFPWSDLRNLS), 124–145 (ALQLLKMNHNRLGSLPRDALGA), and 148–169 (DLRSLRINNNRLRTLEPGTFDA). N-linked (GlcNAc...) asparagine glycosylation is present at N121. The 52-residue stretch at 181-232 (NPFHCSCGLVWLQAWAASTRVSLPEPDSIACASPPELQGVPVHRLPALPCAP) folds into the LRRCT domain. In terms of domain architecture, Ig-like spans 233–372 (PSVRLSAEPP…GTNSTSLRVT (140 aa)). A disulfide bridge links C260 with C356. Over residues 290-300 (KEEDGGDKVED) the composition is skewed to basic and acidic residues. The interval 290 to 328 (KEEDGGDKVEDGEGDGDEDLPTQTEAPTPTPAPAWPAPP) is disordered. The segment covering 317-328 (TPTPAPAWPAPP) has biased composition (pro residues). N338 and N365 each carry an N-linked (GlcNAc...) asparagine glycan. The segment at 376–423 (AGPPKHAPGTGEEPDAQVPTSERKATTKGRSNSVLPFKPEGKTKGQGL) is disordered. N-linked (GlcNAc...) asparagine glycans are attached at residues N474 and N563. Residues 590 to 610 (LLVIVTVSVFLLVLATVPLLG) traverse the membrane as a helical segment. Topologically, residues 611–745 (AACCHLLAKH…INGNYRQTAG (135 aa)) are cytoplasmic. The interval 654 to 697 (SEKSYPARGEAGGEEPEEVPEEGLDEDVEQGDPSGDLQREESLA) is disordered. The span at 665-683 (GGEEPEEVPEEGLDEDVEQ) shows a compositional bias: acidic residues. Position 719 is a phosphotyrosine (Y719). Position 720 is a phosphoserine (S720).

As to quaternary structure, homomultimer. Interacts with NTRK1/TrkA. At 11.5 dpc, expressed in spinal nerves, their roots and the ventral spinal cord. At 12.5 dpc, detected in the ventral spinal cord, dorsal root ganglia (DRG), dorsal and ventral roots and sympathetic chain ganglia. At 12.5 dpc, expressed in almost all motor neurons which also express RET and in almost all DRG sensory neurons which also express NTRK1. At 18.5 dpc, expressed only in a subset of NTRK1-expressing neurons but still expressed in nearly all RET-expressing neurons.

The protein resides in the cell membrane. Its function is as follows. Required for axon extension during neural development. The chain is Immunoglobulin superfamily containing leucine-rich repeat protein 2 (Islr2) from Mus musculus (Mouse).